A 547-amino-acid polypeptide reads, in one-letter code: Auxin transporter-like protein 3 (547 aa).

Topologically, residues 1–74 (MASGSSGGGY…DAWFSCASNQ (74 aa)) are cytoplasmic. The helical transmembrane segment at 75–92 (VAQVLLTLPYSFAQLGMA) threads the bilayer. Topologically, residues 93 to 94 (SG) are extracellular. Residues 95–115 (LLFQLFYGLLGSWTAYLISIL) form a helical membrane-spanning segment. Topologically, residues 116-151 (YLEYRTRKERDKVDFRNHVIQWFEVLDGLLGRHWRN) are cytoplasmic. A helical membrane pass occupies residues 152-172 (VGLAFNCTFLLFGSVIQLIGC). Residues 173 to 187 (ASNIYYINDHLDKRT) are Extracellular-facing. The helical transmembrane segment at 188-208 (WTYIFGACCATTVFIPSFHNY) threads the bilayer. The Cytoplasmic portion of the chain corresponds to 209–211 (RIW). The helical transmembrane segment at 212–232 (SFLGLLMTTYTAWYIAVASLI) threads the bilayer. Over 233–247 (HGQVEGVAHSGPTSI) the chain is Extracellular. A helical membrane pass occupies residues 248–268 (VLYFTGATNILYTFGGHAVTV). Topologically, residues 269–281 (EIMHAMWRPQKFK) are cytoplasmic. A helical membrane pass occupies residues 282–302 (AIYLLATVYVLTLTLPSASAA). The Extracellular portion of the chain corresponds to 303–329 (YWAFGDALLTHSNALALLPRTPWRDAA). Residues 330–350 (VVLMLIHQFITFGFACTPLYF) form a helical membrane-spanning segment. Topologically, residues 351-371 (VWEKLVGLHGCPSLCKRAAAR) are cytoplasmic. The helical transmembrane segment at 372-392 (LPVVLPIWFLAIIFPFFGPIN) threads the bilayer. Ser-393 is a topological domain (extracellular). The chain crosses the membrane as a helical span at residues 394–414 (AVGSLLVSFTVYIIPSLAYMV). Residues 415 to 440 (TFRSPQSRQNAVERPPRFAGGWTGAY) are Cytoplasmic-facing. A helical transmembrane segment spans residues 441–461 (VINSFVVAWVLVVGFGFGGWA). Topologically, residues 462 to 547 (SITNFVHQVD…HHHRHHRHGL (86 aa)) are extracellular. The N-linked (GlcNAc...) asparagine glycan is linked to Asn-509.

It belongs to the amino acid/polyamine transporter 2 family. Amino acid/auxin permease (AAAP) (TC 2.A.18.1) subfamily.

The protein resides in the cell membrane. In terms of biological role, carrier protein involved in proton-driven auxin influx. May mediate the formation of auxin gradient from developing leaves (site of auxin biosynthesis) to tips. This is Auxin transporter-like protein 3 from Oryza sativa subsp. japonica (Rice).